The chain runs to 350 residues: E3 ubiquitin-protein ligase TRIM63 (350 aa).

The segment at 23 to 79 (CPICLEMFTKPVVILPCQHNLCRKCANDIFQAANPYWTNRGGSVSMSGGRFRCPSCR) adopts an RING-type zinc-finger fold. The interaction with TTN stretch occupies residues 74–218 (RCPSCRHEVI…LSQKFDTLYA (145 aa)). The B box-type zinc-finger motif lies at 117–159 (GSHPMCKEHEDEKINIYCLTCEVPTCSLCKVFGAHQACEVAPL). Zn(2+)-binding residues include Cys-122, His-125, Cys-145, and His-151. Residues 207–269 (EELSQKFDTL…VETAIQSLDE (63 aa)) are a coiled coil. Positions 267–325 (LDEPGGATFLSSAKQLIKSNVEASKGCQLGKTEQGFENMDYFTLDLEHIAEALRAIDFG) constitute a COS domain. A compositionally biased stretch (acidic residues) spans 325-344 (GTDEEEEEFTEEEADEEEGV). Positions 325-350 (GTDEEEEEFTEEEADEEEGVTTEGHQ) are disordered.

As to quaternary structure, homodimer. Homooligomer and heterooligomer. Interacts with SUMO2, titin/TTN and GMEB1. Interacts with TRIM54 and probably with TRIM55. Interacts with TNNI3. Forms a ternary complex with RACK1 and PRKCE. Interacts with CKM.

The protein localises to the cytoplasm. It is found in the nucleus. Its subcellular location is the myofibril. It localises to the sarcomere. The protein resides in the m line. The protein localises to the z line. It catalyses the reaction S-ubiquitinyl-[E2 ubiquitin-conjugating enzyme]-L-cysteine + [acceptor protein]-L-lysine = [E2 ubiquitin-conjugating enzyme]-L-cysteine + N(6)-ubiquitinyl-[acceptor protein]-L-lysine.. It functions in the pathway protein modification; protein ubiquitination. Its function is as follows. E3 ubiquitin ligase. Mediates the ubiquitination and subsequent proteasomal degradation of CKM, GMEB1 and HIBADH. Regulates the proteasomal degradation of muscle proteins under amino acid starvation, where muscle protein is catabolized to provide other organs with amino acids. Inhibits de novo skeletal muscle protein synthesis under amino acid starvation. Regulates proteasomal degradation of cardiac troponin I/TNNI3 and probably of other sarcomeric-associated proteins. May play a role in striated muscle atrophy and hypertrophy by regulating an anti-hypertrophic PKC-mediated signaling pathway. May regulate the organization of myofibrils through TTN in muscle cells. The polypeptide is E3 ubiquitin-protein ligase TRIM63 (Trim63) (Mus musculus (Mouse)).